A 232-amino-acid chain; its full sequence is Flagellar L-ring protein (232 aa).

The N-terminal stretch at 1–21 (MQKYALHAYPVMALMVATLTG) is a signal peptide. A lipid anchor (N-palmitoyl cysteine) is attached at cysteine 22. The S-diacylglycerol cysteine moiety is linked to residue cysteine 22.

This sequence belongs to the FlgH family. The basal body constitutes a major portion of the flagellar organelle and consists of four rings (L,P,S, and M) mounted on a central rod.

It localises to the cell outer membrane. Its subcellular location is the bacterial flagellum basal body. Its function is as follows. Assembles around the rod to form the L-ring and probably protects the motor/basal body from shearing forces during rotation. This is Flagellar L-ring protein from Salmonella gallinarum (strain 287/91 / NCTC 13346).